A 570-amino-acid chain; its full sequence is MNTQILILATSAFFYVRADKICLGHHAVSNGTKVDTLTEKGIEVVNATETVEQTNIPKICSKGKQTVDLGQCGLLGTVIGPPQCDQFLEFSANLIVERREGNDICYPGKFDNEETLRQILRKSGGIKKENMGFTYTGVRTNGETSACRRSRSSFYAEMKWLLSSTDNGIFPQMTKSYKNTKKVPALITWGIHHSGSTTEQTRLYGSGNKLITVWSSKYQQSFVPNPGPRPQINGQSGRIDFHWLMLDPNDTVTFSFNGAFIAPDRASFLRGKSLGIQSDAQLDNNCEGECYHIGGTIISNLPFQNINSRTIGKCPRYVKQKSLMLATGMKNVPEAPAHKQLTHHMRKKRGLFGAIAGFIENGWEGLIDGWYGYKHQNAQGEGTAADYKSTQSAINQITGKLNRLIEKTNQQFELIDNEFNEIEKQIGNVINWTRDSIIEVWSYNAEFLVAVENQHTIDLTDSEMNKLYEKVRRQLRENAEEDGNGCFEIFHQCDNDCMASIRNNTYDHKKYRKEAIQNRIQIDAVKLSSGYKDIILWFSFGASCFLFLAIAMGLVFICIKNGNMRCTICI.

Residues methionine 1 to alanine 18 form the signal peptide. At aspartate 19–aspartate 533 the chain is on the extracellular side. 6 disulfide bridges follow: cysteine 22/cysteine 486, cysteine 60/cysteine 286, cysteine 72/cysteine 84, cysteine 105/cysteine 147, cysteine 290/cysteine 314, and cysteine 493/cysteine 497. 2 N-linked (GlcNAc...) asparagine; by host glycosylation sites follow: asparagine 30 and asparagine 46. N-linked (GlcNAc...) asparagine; by host glycosylation is present at asparagine 249. N-linked (GlcNAc...) asparagine; by host glycosylation occurs at asparagine 431. N-linked (GlcNAc...) asparagine; by host glycosylation occurs at asparagine 503. A helical transmembrane segment spans residues isoleucine 534 to leucine 554. Residues valine 555 to isoleucine 570 lie on the Cytoplasmic side of the membrane. Residues cysteine 566 and cysteine 569 are each lipidated (S-palmitoyl cysteine; by host).

Belongs to the influenza viruses hemagglutinin family. Homotrimer of disulfide-linked HA1-HA2. In terms of processing, palmitoylated. In natural infection, inactive HA is matured into HA1 and HA2 outside the cell by one or more trypsin-like, arginine-specific endoprotease secreted by the bronchial epithelial cells. One identified protease that may be involved in this process is secreted in lungs by club cells.

Its subcellular location is the virion membrane. The protein resides in the host apical cell membrane. Binds to sialic acid-containing receptors on the cell surface, bringing about the attachment of the virus particle to the cell. This attachment induces virion internalization of about two third of the virus particles through clathrin-dependent endocytosis and about one third through a clathrin- and caveolin-independent pathway. Plays a major role in the determination of host range restriction and virulence. Class I viral fusion protein. Responsible for penetration of the virus into the cell cytoplasm by mediating the fusion of the membrane of the endocytosed virus particle with the endosomal membrane. Low pH in endosomes induces an irreversible conformational change in HA2, releasing the fusion hydrophobic peptide. Several trimers are required to form a competent fusion pore. In terms of biological role, binds to sialic acid-containing receptors on the cell surface, bringing about the attachment of the virus particle to the cell. This attachment induces virion internalization either through clathrin-dependent endocytosis or through clathrin- and caveolin-independent pathway. Plays a major role in the determination of host range restriction and virulence. Class I viral fusion protein. Responsible for penetration of the virus into the cell cytoplasm by mediating the fusion of the membrane of the endocytosed virus particle with the endosomal membrane. Low pH in endosomes induces an irreversible conformational change in HA2, releasing the fusion hydrophobic peptide. Several trimers are required to form a competent fusion pore. This chain is Hemagglutinin, found in Influenza A virus (strain A/Equine/Cambridge/1/1963 H7N7).